Reading from the N-terminus, the 107-residue chain is Large ribosomal subunit protein uL24 (107 aa).

Belongs to the universal ribosomal protein uL24 family. As to quaternary structure, part of the 50S ribosomal subunit.

One of two assembly initiator proteins, it binds directly to the 5'-end of the 23S rRNA, where it nucleates assembly of the 50S subunit. In terms of biological role, one of the proteins that surrounds the polypeptide exit tunnel on the outside of the subunit. This Streptomyces avermitilis (strain ATCC 31267 / DSM 46492 / JCM 5070 / NBRC 14893 / NCIMB 12804 / NRRL 8165 / MA-4680) protein is Large ribosomal subunit protein uL24.